A 464-amino-acid polypeptide reads, in one-letter code: NADH dehydrogenase [ubiquinone] flavoprotein 1, mitochondrial (464 aa).

The transit peptide at 1 to 20 (MLAARRLLGWSLPARVSVRF) directs the protein to the mitochondrion. Lys81 is subject to N6-acetyllysine; alternate. Position 81 is an N6-succinyllysine; alternate (Lys81). 87-96 (GRGGAGFPTG) contacts NADH. The residue at position 104 (Lys104) is an N6-acetyllysine. 199–247 (RGAGAYICGEETALIESIEGKQGKPRLKPPFPADVGVFGCPTTVANVET) serves as a coordination point for FMN. Arg257 bears the Omega-N-methylarginine mark. Lys375 is subject to N6-acetyllysine. The [4Fe-4S] cluster site is built by Cys379, Cys382, Cys385, and Cys425.

The protein belongs to the complex I 51 kDa subunit family. In terms of assembly, core subunit of respiratory chain NADH dehydrogenase (Complex I) which is composed of 45 different subunits. This is a component of the flavoprotein-sulfur (FP) fragment of the enzyme. Interacts with RAB5IF. The cofactor is FMN. Requires [4Fe-4S] cluster as cofactor.

The protein resides in the mitochondrion inner membrane. The catalysed reaction is a ubiquinone + NADH + 5 H(+)(in) = a ubiquinol + NAD(+) + 4 H(+)(out). In terms of biological role, core subunit of the mitochondrial membrane respiratory chain NADH dehydrogenase (Complex I) which catalyzes electron transfer from NADH through the respiratory chain, using ubiquinone as an electron acceptor. Part of the peripheral arm of the enzyme, where the electrons from NADH are accepted by flavin mononucleotide (FMN) and then passed along a chain of iron-sulfur clusters by electron tunnelling to the final acceptor ubiquinone. Contains FMN, which is the initial electron acceptor as well as one iron-sulfur cluster. In Pongo pygmaeus (Bornean orangutan), this protein is NADH dehydrogenase [ubiquinone] flavoprotein 1, mitochondrial.